A 498-amino-acid polypeptide reads, in one-letter code: Tyrosine 3-monooxygenase (498 aa).

Polar residues predominate over residues 1 to 10; the sequence is MPTPSASSPQ. Residues 1–33 form a disordered region; sequence MPTPSASSPQPKGFRRAVSEQDTKQAEAVTSPR. Residues serine 19 and serine 31 each carry the phosphoserine modification. A Phosphoserine; by CaMK2 and PKA modification is found at serine 40. The Fe cation site is built by histidine 331, histidine 336, and glutamate 376. At serine 472 the chain carries Phosphoserine.

This sequence belongs to the biopterin-dependent aromatic amino acid hydroxylase family. As to quaternary structure, homotetramer. Interacts (when phosphorylated at Ser-19) with YWHAG; one YWHAG dimer bounds to one TH tetramer and this interaction may influence the phosphorylation and dephosphorylation of other sites. Interacts with NT5DC2; the interaction results in reduced phosphorylation and decreased catalytic activity of TH. Requires Fe(2+) as cofactor. Post-translationally, phosphorylated on Ser-19, Ser-31 and Ser-40 by several protein kinases with different site specificities. Phosphorylation at Ser-31 and Ser-40 leads to an increase of TH activity. Phosphorylation at Ser-40 activates the enzyme and also counteracts the feedback inhibition of TH by catecholamines. Phosphorylation of Ser-19 and Ser-31 triggers the proteasomal degradation of TH through the ubiquitin-proteasome pathway. Phosphorylation at Ser-31 facilitates transport of TH from the soma to the nerve terminals via the microtubule network. Phosphorylation at Ser-19 induces the high-affinity binding to the 14-3-3 protein YWHAG; this interaction may influence the phosphorylation and dephosphorylation of other sites. Ser-19 increases the phosphorylation at Ser-40 in a hierarchical manner, leading to increased activity. In terms of tissue distribution, expressed in the adrenal gland. Expressed in the retina. Expressed in the in the striatum (at protein level).

It is found in the cytoplasm. Its subcellular location is the perinuclear region. The protein localises to the nucleus. The protein resides in the cell projection. It localises to the axon. It is found in the cytoplasmic vesicle. Its subcellular location is the secretory vesicle. The protein localises to the synaptic vesicle. It carries out the reaction (6R)-L-erythro-5,6,7,8-tetrahydrobiopterin + L-tyrosine + O2 = (4aS,6R)-4a-hydroxy-L-erythro-5,6,7,8-tetrahydrobiopterin + L-dopa. The protein operates within catecholamine biosynthesis; dopamine biosynthesis; dopamine from L-tyrosine: step 1/2. With respect to regulation, inhibited in feedback fashion by the catecholamine neurotransmitters, especially by dopamine in competition with tetrahydrobiopterin. Phosphorylation of several Ser/Thr residues in the N-terminus regulates the catalytic activity. Ser-31 and Ser-40 are readily phosphorylated to activate the catalytic activity. A Cysteine modification induced by N-ethylmaleimide (NEM), inhibits tyrosine 3-monooxygenase activity through the modification of the Cys-177. Functionally, catalyzes the conversion of L-tyrosine to L-dihydroxyphenylalanine (L-Dopa), the rate-limiting step in the biosynthesis of catecholamines, dopamine, noradrenaline, and adrenaline. Uses tetrahydrobiopterin and molecular oxygen to convert tyrosine to L-Dopa. In addition to tyrosine, is able to catalyze the hydroxylation of phenylalanine and tryptophan with lower specificity. Positively regulates the regression of retinal hyaloid vessels during postnatal development. This Mus musculus (Mouse) protein is Tyrosine 3-monooxygenase (Th).